Consider the following 411-residue polypeptide: Acetylornithine aminotransferase (411 aa).

Pyridoxal 5'-phosphate-binding positions include 107–108 and phenylalanine 141; that span reads GT. Residue arginine 144 coordinates N(2)-acetyl-L-ornithine. Residue 227–230 coordinates pyridoxal 5'-phosphate; that stretch reads DEIQ. Lysine 256 carries the N6-(pyridoxal phosphate)lysine modification. Threonine 284 serves as a coordination point for N(2)-acetyl-L-ornithine. Residue threonine 285 coordinates pyridoxal 5'-phosphate.

It belongs to the class-III pyridoxal-phosphate-dependent aminotransferase family. ArgD subfamily. Homodimer. Pyridoxal 5'-phosphate serves as cofactor.

Its subcellular location is the cytoplasm. The enzyme catalyses N(2)-acetyl-L-ornithine + 2-oxoglutarate = N-acetyl-L-glutamate 5-semialdehyde + L-glutamate. It functions in the pathway amino-acid biosynthesis; L-arginine biosynthesis; N(2)-acetyl-L-ornithine from L-glutamate: step 4/4. In Xylella fastidiosa (strain 9a5c), this protein is Acetylornithine aminotransferase.